Reading from the N-terminus, the 451-residue chain is Glycine--tRNA ligase (451 aa).

The substrate site is built by arginine 101 and glutamate 151. ATP contacts are provided by residues 183-185 (RNE), 193-198 (FRTCEF), 267-268 (EL), and 312-315 (GLTR). Residue 198–202 (FEQME) participates in substrate binding. A substrate-binding site is contributed by 308–312 (ETSAG).

This sequence belongs to the class-II aminoacyl-tRNA synthetase family. In terms of assembly, homodimer.

The protein localises to the cytoplasm. It catalyses the reaction tRNA(Gly) + glycine + ATP = glycyl-tRNA(Gly) + AMP + diphosphate. Catalyzes the attachment of glycine to tRNA(Gly). The sequence is that of Glycine--tRNA ligase from Treponema denticola (strain ATCC 35405 / DSM 14222 / CIP 103919 / JCM 8153 / KCTC 15104).